A 364-amino-acid polypeptide reads, in one-letter code: MHVVLAGGGTAGHIEPALALADALRRQDPTVGITALGTERGLETRLVPERGYELALIPAVPLPRKPTPELITVPGRLRGTIKATEQILERTKADAVAGFGGYVALPAYLAAKRLGVPIVVHEANARPGLANKIGSRYAAQVAVSTPDSKLRNSRYIGIPLRRSIATLDRAAARPEARAMFGLDPNLPTLLVTGGSQGARRLNEVIQQVAPWLQQAGIQILHAVGPKNELPQVHQMPGMPPYIPVSYLDRMDLAYAAADMMLCRAGAMTVAELSAVGLPAAYVPLPIGNGEQRLNAQPVVKAGGGLLVDDAELTPEWLQQNVLPVLADPHRLYEMSRAAAEFGRRDADDLLVGMVYEAIAARARR.

UDP-N-acetyl-alpha-D-glucosamine-binding positions include 10 to 12 (TAG), Asn124, Arg161, Ser195, and Gln291.

The protein belongs to the glycosyltransferase 28 family. MurG subfamily.

It localises to the cell membrane. It catalyses the reaction di-trans,octa-cis-undecaprenyl diphospho-N-acetyl-alpha-D-muramoyl-L-alanyl-D-glutamyl-meso-2,6-diaminopimeloyl-D-alanyl-D-alanine + UDP-N-acetyl-alpha-D-glucosamine = di-trans,octa-cis-undecaprenyl diphospho-[N-acetyl-alpha-D-glucosaminyl-(1-&gt;4)]-N-acetyl-alpha-D-muramoyl-L-alanyl-D-glutamyl-meso-2,6-diaminopimeloyl-D-alanyl-D-alanine + UDP + H(+). Its pathway is cell wall biogenesis; peptidoglycan biosynthesis. Cell wall formation. Catalyzes the transfer of a GlcNAc subunit on undecaprenyl-pyrophosphoryl-MurNAc-pentapeptide (lipid intermediate I) to form undecaprenyl-pyrophosphoryl-MurNAc-(pentapeptide)GlcNAc (lipid intermediate II). The protein is UDP-N-acetylglucosamine--N-acetylmuramyl-(pentapeptide) pyrophosphoryl-undecaprenol N-acetylglucosamine transferase of Streptomyces coelicolor (strain ATCC BAA-471 / A3(2) / M145).